The primary structure comprises 268 residues: Undecaprenyl-diphosphatase (268 aa).

A run of 7 helical transmembrane segments spans residues 47–67, 83–103, 109–129, 144–164, 184–204, 218–238, and 246–266; these read FAVL…FAKL, FVIG…VAGS, LFNP…LLWV, FPLP…IPGV, AAEF…VYDF, IVAI…KTFL, and FELF…ALAM.

Belongs to the UppP family.

Its subcellular location is the cell inner membrane. The catalysed reaction is di-trans,octa-cis-undecaprenyl diphosphate + H2O = di-trans,octa-cis-undecaprenyl phosphate + phosphate + H(+). Its function is as follows. Catalyzes the dephosphorylation of undecaprenyl diphosphate (UPP). Confers resistance to bacitracin. The protein is Undecaprenyl-diphosphatase of Rhodopseudomonas palustris (strain BisB5).